Here is a 1231-residue protein sequence, read N- to C-terminus: Cohesin subunit SA-2 (1231 aa).

Residue Met1 is modified to N-acetylmethionine. The disordered stretch occupies residues 1-75; the sequence is MIAAPEIPTD…GSNRMNGHHQ (75 aa). The span at 36-48 shows a compositional bias: basic residues; sequence KQGKGKTCKKGKK. The region spanning 293–378 is the SCD domain; the sequence is FVHRYRDAIA…SRFKDRIVSM (86 aa). Lys607 bears the N6-acetyllysine mark. 4 positions are modified to phosphoserine: Ser1058, Ser1061, Ser1064, and Ser1065. Residues 1062 to 1087 form a disordered region; it reads GMSSRGSTVRSKKSKPSTGKRKVVEG. Residues 1071–1082 show a composition bias toward basic residues; that stretch reads RSKKSKPSTGKR. Thr1112 is modified (phosphothreonine). Phosphoserine occurs at positions 1177 and 1178.

It belongs to the SCC3 family. In terms of assembly, interacts directly with RAD21 in cohesin complex. Cohesin complexes are composed of a heterodimer between a SMC1 protein (SMC1A or SMC1B) and SMC3, which are attached via their hinge domain, and RAD21 which link them at their heads, and one STAG protein (STAG1, STAG2 or STAG3). In cohesin complexes, STAG2 is mutually exclusive with STAG1 and STAG3. Post-translationally, phosphorylated by PLK1. The large dissociation of cohesin from chromosome arms during prophase is partly due to its phosphorylation.

It localises to the nucleus. The protein localises to the chromosome. The protein resides in the centromere. Component of cohesin complex, a complex required for the cohesion of sister chromatids after DNA replication. The cohesin complex apparently forms a large proteinaceous ring within which sister chromatids can be trapped. At anaphase, the complex is cleaved and dissociates from chromatin, allowing sister chromatids to segregate. The cohesin complex may also play a role in spindle pole assembly during mitosis. This Mus musculus (Mouse) protein is Cohesin subunit SA-2 (Stag2).